The sequence spans 497 residues: Tripartite motif-containing protein 5 (497 aa).

N-acetylalanine is present on Ala2. Residues Cys15 to Arg60 form an RING-type zinc finger. Ser87 is modified (phosphoserine). The B box-type zinc-finger motif lies at Leu92 to Met133. Zn(2+) contacts are provided by Cys97, His100, Cys119, and His125. Residues Ala137–Gln225 are a coiled coil. Positions Phe187–Asn200 are required for interaction with GABARAP and for autophagy. A B30.2/SPRY domain is found at Leu283–Ser497.

The protein belongs to the TRIM/RBCC family. As to quaternary structure, can form homodimers and homotrimers. In addition to lower-order dimerization, also exhibits a higher-order multimerization and both low- and high-order multimerizations are essential for its restriction activity. Interacts with BTBD1 and BTBD2. Interacts with PSMC4, PSMC5, PSMD7 and HSPA8/HSC70. Interacts (via B30.2/SPRY domain) with HSPA1A/B. Interacts with PSMC2, MAP3K7/TAK1, TAB2 and TAB3. Interacts with SQSTM1. Interacts with TRIM6 and TRIM34. Interacts with ULK1 (phosphorylated form), GABARAP, GABARAPL1, GABARAPL2, MAP1LC3A, MAP1LC3C and BECN1. In terms of processing, degraded in a proteasome-independent fashion in the absence of viral infection but in a proteasome-dependent fashion following exposure to restriction sensitive virus. Post-translationally, autoubiquitinated in a RING finger- and UBE2D2-dependent manner. Monoubiquitinated by TRIM21. Deubiquitinated by Yersinia YopJ. Ubiquitination may not lead to proteasomal degradation.

It is found in the cytoplasm. It localises to the nucleus. The enzyme catalyses S-ubiquitinyl-[E2 ubiquitin-conjugating enzyme]-L-cysteine + [acceptor protein]-L-lysine = [E2 ubiquitin-conjugating enzyme]-L-cysteine + N(6)-ubiquitinyl-[acceptor protein]-L-lysine.. It participates in protein modification; protein ubiquitination. Its function is as follows. Capsid-specific restriction factor that prevents infection from non-host-adapted retroviruses. Blocks viral replication early in the life cycle, after viral entry but before reverse transcription. In addition to acting as a capsid-specific restriction factor, also acts as a pattern recognition receptor that activates innate immune signaling in response to the retroviral capsid lattice. Binding to the viral capsid triggers its E3 ubiquitin ligase activity, and in concert with the heterodimeric ubiquitin conjugating enzyme complex UBE2V1-UBE2N (also known as UBC13-UEV1A complex) generates 'Lys-63'-linked polyubiquitin chains, which in turn are catalysts in the autophosphorylation of the MAP3K7/TAK1 complex (includes TAK1, TAB2, and TAB3). Activation of the MAP3K7/TAK1 complex by autophosphorylation results in the induction and expression of NF-kappa-B and MAPK-responsive inflammatory genes, thereby leading to an innate immune response in the infected cell. Plays a role in regulating autophagy through activation of autophagy regulator BECN1 by causing its dissociation from its inhibitors BCL2 and TAB2. The chain is Tripartite motif-containing protein 5 (TRIM5) from Papio anubis (Olive baboon).